The primary structure comprises 103 residues: Phosphoribosyl-ATP pyrophosphatase (103 aa).

Belongs to the PRA-PH family.

The protein resides in the cytoplasm. The catalysed reaction is 1-(5-phospho-beta-D-ribosyl)-ATP + H2O = 1-(5-phospho-beta-D-ribosyl)-5'-AMP + diphosphate + H(+). It functions in the pathway amino-acid biosynthesis; L-histidine biosynthesis; L-histidine from 5-phospho-alpha-D-ribose 1-diphosphate: step 2/9. The sequence is that of Phosphoribosyl-ATP pyrophosphatase (hisE) from Listeria monocytogenes serovar 1/2a (strain ATCC BAA-679 / EGD-e).